We begin with the raw amino-acid sequence, 304 residues long: Sperm microtubule inner protein 6 (304 aa).

Belongs to the SPMIP6 family. In terms of assembly, microtubule inner protein component of sperm flagellar doublet microtubules. Interacts with alpha-tubulin.

The protein localises to the cytoplasm. It localises to the cytoskeleton. It is found in the nucleus. The protein resides in the mitochondrion. Its subcellular location is the flagellum axoneme. Functionally, may participate in intramanchette transport and midpiece formation of the sperm tail. May play a potential role in somatic cell proliferation. This chain is Sperm microtubule inner protein 6 (SPMIP6), found in Bos taurus (Bovine).